The following is a 164-amino-acid chain: Mediator of RNA polymerase II transcription subunit 21 (164 aa).

A disordered region spans residues 49-81 (APLPANQTQQGSTLGSNRQTVSPSTQAEAESNF). Residues 53 to 81 (ANQTQQGSTLGSNRQTVSPSTQAEAESNF) show a composition bias toward polar residues. Residues 114–146 (ESQLKIIDDLSKELQSVEQEQVKKIQEKDKLLK) are a coiled coil.

It belongs to the Mediator complex subunit 21 family. As to quaternary structure, component of the Mediator complex.

The protein resides in the nucleus. In terms of biological role, component of the Mediator complex, a coactivator involved in the regulated transcription of nearly all RNA polymerase II-dependent genes. Mediator functions as a bridge to convey information from gene-specific regulatory proteins to the basal RNA polymerase II transcription machinery. Mediator is recruited to promoters by direct interactions with regulatory proteins and serves as a scaffold for the assembly of a functional preinitiation complex with RNA polymerase II and the general transcription factors. The sequence is that of Mediator of RNA polymerase II transcription subunit 21 (SRB7) from Scheffersomyces stipitis (strain ATCC 58785 / CBS 6054 / NBRC 10063 / NRRL Y-11545) (Yeast).